The following is a 493-amino-acid chain: 3-octaprenyl-4-hydroxybenzoate carboxy-lyase (493 aa).

Residue asparagine 172 coordinates Mn(2+). Prenylated FMN contacts are provided by residues 175 to 177 (IYR), 189 to 191 (RWL), and 194 to 195 (RG). A Mn(2+)-binding site is contributed by glutamate 238. Aspartate 287 functions as the Proton donor in the catalytic mechanism.

It belongs to the UbiD family. As to quaternary structure, homohexamer. The cofactor is prenylated FMN. Requires Mn(2+) as cofactor.

It is found in the cell membrane. It catalyses the reaction a 4-hydroxy-3-(all-trans-polyprenyl)benzoate + H(+) = a 2-(all-trans-polyprenyl)phenol + CO2. It participates in cofactor biosynthesis; ubiquinone biosynthesis. In terms of biological role, catalyzes the decarboxylation of 3-octaprenyl-4-hydroxy benzoate to 2-octaprenylphenol, an intermediate step in ubiquinone biosynthesis. The chain is 3-octaprenyl-4-hydroxybenzoate carboxy-lyase from Shewanella denitrificans (strain OS217 / ATCC BAA-1090 / DSM 15013).